The following is a 334-amino-acid chain: TPR repeat-containing protein YsoA (334 aa).

3 TPR repeats span residues 17-50 (KDRL…DDTE), 52-84 (DLHL…GYGH), and 195-230 (HPII…EPSE).

The polypeptide is TPR repeat-containing protein YsoA (ysoA) (Bacillus subtilis (strain 168)).